The following is a 516-amino-acid chain: D-aminopeptidase (516 aa).

The active-site Nucleophile is Ser61. Lys64 functions as the Proton donor/acceptor in the catalytic mechanism. Residues 476 to 486 (RRSMDAPAPGD) form an important for specificity region. Asp480 contributes to the substrate binding site.

The protein belongs to the peptidase S12 family. In terms of assembly, homodimer.

The enzyme catalyses Release of an N-terminal D-amino acid from a peptide, Xaa-|-Yaa-, in which Xaa is preferably D-Ala, D-Ser or D-Thr. D-amino acid amides and methyl esters also are hydrolyzed, as is glycine amide.. Inhibited by beta-lactam compounds such as 6-aminopenicillic acid, 7-aminocephalosporanic acid, benzylpenicillin and ampicillin. Inhibited by p-chloromercuribenzoate. Hydrolyzes N-terminal residues in D-amino acid-containing peptides. The chain is D-aminopeptidase from Cereibacter sphaeroides (strain ATCC 17023 / DSM 158 / JCM 6121 / CCUG 31486 / LMG 2827 / NBRC 12203 / NCIMB 8253 / ATH 2.4.1.) (Rhodobacter sphaeroides).